A 104-amino-acid chain; its full sequence is Circadian clock oscillator protein KaiB (104 aa).

Belongs to the KaiB family. As to quaternary structure, the KaiABC complex composition changes during the circadian cycle to control KaiC phosphorylation. Complexes KaiC(6), KaiA(2-4):KaiC(6), KaiB(6):KaiC(6) and KaiC(6):KaiB(6):KaiA(12) are among the most important forms, many form cooperatively. Undergoes a major conformational rearrangment; in the free state forms homotetramers as a dimer of dimers. When bound to the CI domain of KaiC switches to a monomeric thioredoxin-fold (KaiB(fs)). KaiB(fs) binds CikA, leading it to dephosphorylate phospho-RpaA.

Functionally, key component of the KaiABC oscillator complex, which constitutes the main circadian regulator in cyanobacteria. Complex composition changes during the circadian cycle to control KaiC phosphorylation. KaiA stimulates KaiC autophosphorylation, while KaiB sequesters KaiA, leading to KaiC autodephosphorylation. Phospho-Ser-431 KaiC accumulation triggers binding of KaiB to form the KaiB(6):KaiC(6) complex, leading to changes in output regulators CikA and SasA. KaiB switches to a thioredoxin-like fold (KaiB(fs)) when bound to KaiC. KaiB(6):KaiC(6) formation exposes a site for KaiA binding that sequesters KaiA from KaiC, making the KaiC(6):KaiB(6):KaiA(12) complex that results in KaiC autodephosphorylation. Its function is as follows. A metamorphic protein which reversibly switches between an inactive tetrameric fold and a rare, thioredoxin-like monomeric fold (KaiB(fs)). KaiB(fs) binds phospho-KaiC, KaiA and CikA. KaiA and CikA compete for binding to KaiB(fs), and KaiB(fs) and SasA compete for binding to KaiC, thus the clock oscillator and output signal pathway are tightly coupled. This is Circadian clock oscillator protein KaiB from Picosynechococcus sp. (strain ATCC 27264 / PCC 7002 / PR-6) (Agmenellum quadruplicatum).